Consider the following 524-residue polypeptide: Inosine-5'-monophosphate dehydrogenase 4 (524 aa).

CBS domains follow at residues 122 to 183 (FINS…VVSE) and 185 to 241 (MTKN…PLAS). S125 bears the Phosphoserine mark. NAD(+) contacts are provided by residues 279–281 (DSS) and 329–331 (GMG). G331 and G333 together coordinate K(+). Residue S334 coordinates IMP. Position 336 (C336) interacts with K(+). Catalysis depends on C336, which acts as the Thioimidate intermediate. IMP contacts are provided by residues 369 to 371 (DGG), 392 to 393 (GG), and 416 to 420 (YRGMG). Residue R438 is the Proton acceptor of the active site. Q450 contributes to the IMP binding site. K(+) contacts are provided by E509, G510, and G511.

This sequence belongs to the IMPDH/GMPR family. Homotetramer. Seems to be able to form heterotetramers composed from more than 1 of the 3 IMPDH gene products (IMD2-4). Requires K(+) as cofactor.

The protein resides in the cytoplasm. The catalysed reaction is IMP + NAD(+) + H2O = XMP + NADH + H(+). It functions in the pathway purine metabolism; XMP biosynthesis via de novo pathway; XMP from IMP: step 1/1. Its activity is regulated as follows. Mycophenolic acid (MPA) is a non-competitive inhibitor that prevents formation of the closed enzyme conformation by binding to the same site as the amobile flap. In contrast, mizoribine monophosphate (MZP) is a competitive inhibitor that induces the closed conformation. MPA is a potent inhibitor of mammalian IMPDHs but a poor inhibitor of the bacterial enzymes. MZP is a more potent inhibitor of bacterial IMPDH. Functionally, catalyzes the conversion of inosine 5'-phosphate (IMP) to xanthosine 5'-phosphate (XMP), the first committed and rate-limiting step in the de novo synthesis of guanine nucleotides, and therefore plays an important role in the regulation of cell growth. This chain is Inosine-5'-monophosphate dehydrogenase 4, found in Saccharomyces cerevisiae (strain ATCC 204508 / S288c) (Baker's yeast).